The primary structure comprises 898 residues: Chloride channel protein 2 (898 aa).

Over 1–90 (MAAPAAAAVE…RCHKFLVSRV (90 aa)) the chain is Cytoplasmic. The interval 19-37 (QYEQTLMYGRYTQDLGAFA) is essential for channel gating by both voltage and cell volume. Position 23 is a phosphothreonine (Thr-23). A modulates channel gating by both voltage and cell volume region spans residues 39–52 (EEAARIRLGGPEPW). 2 consecutive transmembrane segments (helical) span residues 91–124 (GEDWIFLVLLGLLMALVSWAMDYAIAACLQAQQW) and 133–158 (LLLQYLAWVTYPVVLITFSAGFTQIL). Positions 164-168 (GSGIP) match the Selectivity filter part_1 motif. Residues 167-174 (IPEMKTIL) constitute an intramembrane region (helical). 2 helical membrane passes run 183 to 201 (LTLKTFVAKVIGLTCALGS) and 208 to 226 (EGPFVHIASMCAALLSKFL). The short motif at 206 to 210 (GKEGP) is the Selectivity filter part_2 element. Intramembrane regions (helical) lie at residues 242–254 (MLAAACAVGVGCC) and 258–266 (PIGGVLFSI). A run of 5 helical transmembrane segments spans residues 278-298 (YWRGFFAATFSAFIFRVLAVW), 324-352 (LPAFAVIGIASGFGGALFVYLNRKIVQVM), 361-380 (FLMRKRLLFPALVTLLISTL), 432-452 (ANVFLTLVIFILMKFWMSALA), and 460-483 (GAFMPVFVIGAAFGRLVGESMAAW). The Selectivity filter part_3 signature appears at 460–464 (GAFMP). Residues 500 to 514 (GGYAVVGAAALAGAV) constitute an intramembrane region (helical). Positions 515-516 (TH) form an intramembrane region, note=Loop between two helices. An intramembrane region (helical) is located at residues 517–528 (TVSTAVIVFELT). The segment at residues 529 to 533 (GQIAH) is an intramembrane region (note=Loop between two helices). The chain crosses the membrane as a helical span at residues 534 to 551 (ILPVMIAVILANAVAQSL). Residues 552-898 (QPSLYDSIIR…SPSDSDDKCQ (347 aa)) lie on the Cytoplasmic side of the membrane. In terms of domain architecture, CBS 1 spans 587 to 645 (MVRDVPHVALSCTFRDLRLALHRTKGRTLALVESPESMILLGSIERTQVVALLAAQLSP). The span at 647–658 (RRRQSKQKRRVA) shows a compositional bias: basic residues. Positions 647-675 (RRRQSKQKRRVAHTSPPSCQESPPSPETS) are disordered. Ser-710 carries the phosphoserine modification. The disordered stretch occupies residues 726–766 (FCGSPPPEAASESEKSESSEKRKSKRVRISLASDSDLEGEM). Basic and acidic residues predominate over residues 737–746 (ESEKSESSEK). Ser-758 is modified (phosphoserine). The CBS 2 domain occupies 790-850 (IDPAPFQLVE…GSVTAQGVKV (61 aa)). Positions 812 to 813 (LL) match the Basolateral membrane sorting motif. A disordered region spans residues 856–898 (SFRDSATSSSDTETTEVHALWGPRSRHGLPREGSPSDSDDKCQ).

This sequence belongs to the chloride channel (TC 2.A.49) family. ClC-2/CLCN2 subfamily. In terms of assembly, homodimer. Interacts with auxiliary subunit HEPACAM. Phosphorylated. Activated by dephosphorylation. Ubiquitously expressed.

The protein localises to the cell membrane. It is found in the basolateral cell membrane. It localises to the cell projection. Its subcellular location is the dendritic spine membrane. The protein resides in the axon. The enzyme catalyses chloride(in) = chloride(out). The catalysed reaction is thiocyanate(in) = thiocyanate(out). It catalyses the reaction bromide(in) = bromide(out). It carries out the reaction nitrate(in) = nitrate(out). The enzyme catalyses iodide(out) = iodide(in). Common gate kinetics are down-regulated by intracellular ATP. Inhibited by AK-42, a derivative of meclofenamate. Inhibited by Cd(2+). Inhibited by Zn(2+) and PKC activation. Inhibited at acidic pH. CCLN2:HEPACAM channel conductance is up-regulated upon hypo-osmolarity. In terms of biological role, voltage-gated and osmosensitive chloride channel. Forms a homodimeric channel where each subunit has its own ion conduction pathway. Conducts double-barreled currents controlled by two types of gates, two fast glutamate gates that control each subunit independently and a slow common gate that opens and shuts off both subunits simultaneously. Displays inward rectification currents activated upon membrane hyperpolarization and extracellular hypotonicity. Contributes to chloride conductance involved in neuron excitability. In hippocampal neurons, generates a significant part of resting membrane conductance and provides an additional chloride efflux pathway to prevent chloride accumulation in dendrites upon GABA receptor activation. In glia, associates with the auxiliary subunit HEPACAM/GlialCAM at astrocytic processes and myelinated fiber tracts where it may regulate transcellular chloride flux buffering extracellular chloride and potassium concentrations. Regulates aldosterone production in adrenal glands. The opening of CLCN2 channels at hyperpolarized membrane potentials in the glomerulosa causes cell membrane depolarization, activation of voltage-gated calcium channels and increased expression of aldosterone synthase, the rate-limiting enzyme for aldosterone biosynthesis. Contributes to chloride conductance in retinal pigment epithelium involved in phagocytosis of shed photoreceptor outer segments and photoreceptor renewal. Conducts chloride currents at the basolateral membrane of epithelial cells with a role in chloride reabsorption rather than secretion. Permeable to small monovalent anions with chloride &gt; thiocyanate &gt; bromide &gt; nitrate &gt; iodide ion selectivity. In Oryctolagus cuniculus (Rabbit), this protein is Chloride channel protein 2 (CLCN2).